The chain runs to 236 residues: UPF0173 metal-dependent hydrolase AZC_2841 (236 aa).

It belongs to the UPF0173 family.

The sequence is that of UPF0173 metal-dependent hydrolase AZC_2841 from Azorhizobium caulinodans (strain ATCC 43989 / DSM 5975 / JCM 20966 / LMG 6465 / NBRC 14845 / NCIMB 13405 / ORS 571).